A 337-amino-acid polypeptide reads, in one-letter code: 1-aminocyclopropane-1-carboxylate deaminase (337 aa).

Lys50 bears the N6-(pyridoxal phosphate)lysine mark. Ser77 acts as the Nucleophile in catalysis.

Belongs to the ACC deaminase/D-cysteine desulfhydrase family. Homotrimer. It depends on pyridoxal 5'-phosphate as a cofactor.

The catalysed reaction is 1-aminocyclopropane-1-carboxylate + H2O = 2-oxobutanoate + NH4(+). Functionally, catalyzes a cyclopropane ring-opening reaction, the irreversible conversion of 1-aminocyclopropane-1-carboxylate (ACC) to ammonia and alpha-ketobutyrate. Allows growth on ACC as a nitrogen source. The sequence is that of 1-aminocyclopropane-1-carboxylate deaminase from Rhizobium radiobacter (Agrobacterium tumefaciens).